Here is a 637-residue protein sequence, read N- to C-terminus: Limonene/alpha-pinene synthase, chloroplastic (637 aa).

Residues 1-56 constitute a chloroplast transit peptide; the sequence is MALLSIVSLQVPKSCGLKSLISSSNVQKALCISTAVPTLRMRRRQKALVINMKLTT. Mg(2+)-binding residues include D388, D392, and D540. The short motif at 388–392 is the DDXXD motif element; that stretch reads DDMYD.

Belongs to the terpene synthase family. Tpsd subfamily. Mg(2+) serves as cofactor. Requires Mn(2+) as cofactor. K(+) is required as a cofactor.

Its subcellular location is the plastid. It is found in the chloroplast. The catalysed reaction is (2E)-geranyl diphosphate = (4S)-limonene + diphosphate. The enzyme catalyses (2E)-geranyl diphosphate = (1S,5S)-alpha-pinene + diphosphate. The protein operates within terpene metabolism; oleoresin biosynthesis. Functionally, involved in defensive oleoresin formation in conifers in response to insect attack or other injury. Involved in monoterpene (C10) olefins biosynthesis. The polypeptide is Limonene/alpha-pinene synthase, chloroplastic (ag11) (Abies grandis (Grand fir)).